The primary structure comprises 345 residues: Ribonucleoside-diphosphate reductase small chain 2 (345 aa).

Met1 is subject to N-acetylmethionine. The active site involves Tyr131. Residues Ser169 and Ser332 each carry the phosphoserine modification. Thr334 is modified (phosphothreonine). At Ser336 the chain carries Phosphoserine. Residue Lys337 forms a Glycyl lysine isopeptide (Lys-Gly) (interchain with G-Cter in ubiquitin) linkage.

It belongs to the ribonucleoside diphosphate reductase small chain family. In terms of assembly, heterotetramer of two large (R1) and two small (R2) subunits. S.cerevisiae has two different R1 subunits (RNR1 and RNR3) and two different R2 subunits (RNR2 and RNR4). The functional form of the small subunits is a RNR2-RNR4 heterodimer, where RNR2 provides the iron-radical center and RNR4 is required for proper folding of RNR2 and assembly with the large subunits. Under normal growth conditions, the active form of the large subunits is a homodimer of the constitutively expressed RNR1. In damaged cells or cells arrested for DNA synthesis, the reductase consists of multiple species because of the association of the small subunits (RNR2-RNR4) with either the RNR1 homodimer or a heterodimer of RNR1 and the damage-inducible RNR3. Interacts with DIF1.

It localises to the nucleus. The catalysed reaction is a 2'-deoxyribonucleoside 5'-diphosphate + [thioredoxin]-disulfide + H2O = a ribonucleoside 5'-diphosphate + [thioredoxin]-dithiol. Its function is as follows. Provides the precursors necessary for DNA synthesis. Catalyzes the biosynthesis of deoxyribonucleotides from the corresponding ribonucleotides. RNR4 is required for proper folding of RNR2 and assembly with the large subunits. This Saccharomyces cerevisiae (strain ATCC 204508 / S288c) (Baker's yeast) protein is Ribonucleoside-diphosphate reductase small chain 2 (RNR4).